A 122-amino-acid chain; its full sequence is Large ribosomal subunit protein uL14 (122 aa).

This sequence belongs to the universal ribosomal protein uL14 family. Part of the 50S ribosomal subunit. Forms a cluster with proteins L3 and L19. In the 70S ribosome, L14 and L19 interact and together make contacts with the 16S rRNA in bridges B5 and B8.

In terms of biological role, binds to 23S rRNA. Forms part of two intersubunit bridges in the 70S ribosome. The protein is Large ribosomal subunit protein uL14 of Mycoplasma genitalium (strain ATCC 33530 / DSM 19775 / NCTC 10195 / G37) (Mycoplasmoides genitalium).